The sequence spans 372 residues: L-selectin (372 aa).

A signal peptide spans 1–28 (MVFPWRCQSAQRGSWSFLKLWIRTLLCC). Positions 29–38 (DLLPHHGTHC) are excised as a propeptide. The Extracellular segment spans residues 39–332 (WTYHYSERSM…FSKIKEGDYN (294 aa)). The region spanning 55-155 (KFCKHNYTDL…ACHKRKAALC (101 aa)) is the C-type lectin domain. 10 disulfides stabilise this stretch: Cys57–Cys155, Cys128–Cys147, Cys128–Cys160, Cys160–Cys171, Cys165–Cys180, Cys182–Cys191, Cys197–Cys241, Cys227–Cys254, Cys259–Cys303, and Cys289–Cys316. Residues Asn60 and Asn104 are each glycosylated (N-linked (GlcNAc...) asparagine). Ca(2+)-binding residues include Glu118, Asn120, Glu126, Asn143, and Asp144. Positions 156-192 (YTASCQPESCNRHGECVETINNNTCICDPGYYGPQCQ) constitute an EGF-like domain. Asn177 carries N-linked (GlcNAc...) asparagine glycosylation. Sushi domains are found at residues 195–256 (IQCE…ICQV) and 257–318 (IQCM…ICQK). 3 N-linked (GlcNAc...) asparagine glycosylation sites follow: Asn226, Asn246, and Asn278. Residues 333 to 355 (PLFIPVAVMVTAFSGLAFIIWLA) traverse the membrane as a helical segment. Topologically, residues 356-372 (RRLKKGKKSQERMDDPY) are cytoplasmic.

This sequence belongs to the selectin/LECAM family. As to quaternary structure, interaction with SELPLG/PSGL1 and PODXL2 is required for promoting recruitment and rolling of leukocytes. This interaction is dependent on the sialyl Lewis X glycan modification of SELPLG and PODXL2, and tyrosine sulfation modifications of SELPLG. Sulfation on 'Tyr-51' of SELPLG is important for L-selectin binding. N-glycosylated. In terms of tissue distribution, expressed in peripheral blood mononuclear cells (PBMC), spleen and thymus.

It localises to the cell membrane. Its function is as follows. Calcium-dependent lectin that mediates cell adhesion by binding to glycoproteins on neighboring cells. Mediates the adherence of lymphocytes to endothelial cells of high endothelial venules in peripheral lymph nodes. Promotes initial tethering and rolling of leukocytes in endothelia. This chain is L-selectin (Sell), found in Rattus norvegicus (Rat).